We begin with the raw amino-acid sequence, 214 residues long: EEF1A lysine methyltransferase 1 (214 aa).

Ser2 carries the post-translational modification N-acetylserine. Residue Ser2 is modified to Phosphoserine.

This sequence belongs to the class I-like SAM-binding methyltransferase superfamily. EFM5 family.

It is found in the cytoplasm. It catalyses the reaction L-lysyl-[protein] + 3 S-adenosyl-L-methionine = N(6),N(6),N(6)-trimethyl-L-lysyl-[protein] + 3 S-adenosyl-L-homocysteine + 3 H(+). In terms of biological role, protein-lysine methyltransferase that selectively catalyzes the trimethylation of EEF1A at 'Lys-79'. In Mus musculus (Mouse), this protein is EEF1A lysine methyltransferase 1.